The sequence spans 318 residues: Protein teg (318 aa).

The PNPLA domain occupies 7 to 182 (ITFDGGGTLG…VATNTSTASI (176 aa)). Positions 11–16 (GGGTLG) match the GXGXXG motif. The GXSXG signature appears at 42-46 (GNSIG). Ser44 functions as the Nucleophile in the catalytic mechanism. Asp169 serves as the catalytic Proton acceptor.

Functionally, probable lipid hydrolase. The sequence is that of Protein teg (teg) from Priestia megaterium (strain ATCC 14581 / DSM 32 / CCUG 1817 / JCM 2506 / NBRC 15308 / NCIMB 9376 / NCTC 10342 / NRRL B-14308 / VKM B-512 / Ford 19) (Bacillus megaterium).